The primary structure comprises 212 residues: Transcription antitermination protein NusB (212 aa).

The protein belongs to the NusB family.

Functionally, involved in transcription antitermination. Required for transcription of ribosomal RNA (rRNA) genes. Binds specifically to the boxA antiterminator sequence of the ribosomal RNA (rrn) operons. The polypeptide is Transcription antitermination protein NusB (Gloeothece citriformis (strain PCC 7424) (Cyanothece sp. (strain PCC 7424))).